A 311-amino-acid chain; its full sequence is Aspartate carbamoyltransferase catalytic subunit (311 aa).

Carbamoyl phosphate is bound by residues Arg-55 and Thr-56. Lys-85 is an L-aspartate binding site. Carbamoyl phosphate is bound by residues Arg-106, His-135, and Gln-138. The L-aspartate site is built by Arg-168 and Arg-230. Carbamoyl phosphate is bound by residues Leu-268 and Pro-269.

It belongs to the aspartate/ornithine carbamoyltransferase superfamily. ATCase family. Heterododecamer (2C3:3R2) of six catalytic PyrB chains organized as two trimers (C3), and six regulatory PyrI chains organized as three dimers (R2).

The catalysed reaction is carbamoyl phosphate + L-aspartate = N-carbamoyl-L-aspartate + phosphate + H(+). The protein operates within pyrimidine metabolism; UMP biosynthesis via de novo pathway; (S)-dihydroorotate from bicarbonate: step 2/3. Catalyzes the condensation of carbamoyl phosphate and aspartate to form carbamoyl aspartate and inorganic phosphate, the committed step in the de novo pyrimidine nucleotide biosynthesis pathway. This chain is Aspartate carbamoyltransferase catalytic subunit, found in Klebsiella pneumoniae subsp. pneumoniae (strain ATCC 700721 / MGH 78578).